A 155-amino-acid chain; its full sequence is Ribosome maturation factor RimP (155 aa).

It belongs to the RimP family.

The protein resides in the cytoplasm. Its function is as follows. Required for maturation of 30S ribosomal subunits. This is Ribosome maturation factor RimP from Prochlorococcus marinus (strain MIT 9301).